The following is a 322-amino-acid chain: Adenine deaminase (322 aa).

3 residues coordinate Zn(2+): His11, His13, and His189. Glu192 functions as the Proton donor in the catalytic mechanism. Asp270 contributes to the Zn(2+) binding site. Position 271 (Asp271) interacts with substrate.

It belongs to the metallo-dependent hydrolases superfamily. Adenosine and AMP deaminases family. Adenine deaminase type 2 subfamily. Zn(2+) is required as a cofactor.

It carries out the reaction adenine + H2O + H(+) = hypoxanthine + NH4(+). Its function is as follows. Catalyzes the hydrolytic deamination of adenine to hypoxanthine. Plays an important role in the purine salvage pathway and in nitrogen catabolism. The sequence is that of Adenine deaminase from Rhizobium etli (strain ATCC 51251 / DSM 11541 / JCM 21823 / NBRC 15573 / CFN 42).